A 198-amino-acid chain; its full sequence is MSRYTGSTWKISRRLNYSITETGKELRKRAYAPGQHGQRRAKISDYGLQLKEKQKLRFTYGMSEKQFRKTFERASKLKGIHGEMFLVLLESRLDNIVYRLGFAKTRAQARQLVNHGHVLVEGKKVDIASYSLKPGQTITLREKSKNLKIVEEVLKNKFVRADYVSLDKQLNGKYVRYPKRNEFLAEINEQLIVEFYNR.

One can recognise an S4 RNA-binding domain in the interval 91–151 (SRLDNIVYRL…EKSKNLKIVE (61 aa)).

This sequence belongs to the universal ribosomal protein uS4 family. In terms of assembly, part of the 30S ribosomal subunit. Contacts protein S5. The interaction surface between S4 and S5 is involved in control of translational fidelity.

Its function is as follows. One of the primary rRNA binding proteins, it binds directly to 16S rRNA where it nucleates assembly of the body of the 30S subunit. Functionally, with S5 and S12 plays an important role in translational accuracy. This chain is Small ribosomal subunit protein uS4, found in Phytoplasma australiense.